The following is a 201-amino-acid chain: Recombination protein RecR (201 aa).

Residues 60 to 75 (CSRCGNVDTVDPCTVC) form a C4-type zinc finger. The 96-residue stretch at 83-178 (SVIIVVEDVS…KITRLAHGVP (96 aa)) folds into the Toprim domain.

It belongs to the RecR family.

In terms of biological role, may play a role in DNA repair. It seems to be involved in an RecBC-independent recombinational process of DNA repair. It may act with RecF and RecO. This Rhizobium etli (strain CIAT 652) protein is Recombination protein RecR.